We begin with the raw amino-acid sequence, 306 residues long: MSATLPDVAVTEAFTLSAPLRWVGMQDIAIPVHLDAASGSGLAARASVQVDLPRAELKGIHMSRLYRLLDLHLQRPLSPAMLPQLLQALIESHADCASRAARLTLSFALMLRMPALRSEGLSGWRAYPVRIAAQCRAGRTTIQLQVEVLYASTCPCSAALSRQLLSDAFVQQHAWCDALPLQDVAQWLQDHGSYATPHSQRSVAQVCVDLPADTQGFAIQELIGLCEQALATPVQAAVRRPDEQAFARLNGANLMYVEDAARRLRKQLAEHYATFHVAVRHLESLHAHDAVAETGSDDETFFPAAL.

This sequence belongs to the GTP cyclohydrolase IV family.

The enzyme catalyses GTP + H2O = 7,8-dihydroneopterin 3'-triphosphate + formate + H(+). It functions in the pathway cofactor biosynthesis; 7,8-dihydroneopterin triphosphate biosynthesis; 7,8-dihydroneopterin triphosphate from GTP: step 1/1. In terms of biological role, converts GTP to 7,8-dihydroneopterin triphosphate. This is GTP cyclohydrolase FolE2 from Xanthomonas oryzae pv. oryzae (strain MAFF 311018).